An 814-amino-acid chain; its full sequence is Spore development regulator umv1 (814 aa).

Disordered stretches follow at residues 1–36 (MSRP…GSTE), 96–134 (HDRP…VRRG), 267–333 (QGLK…MPRS), 407–441 (PPRD…RAGP), 457–501 (PVRS…ASLT), and 539–814 (QSSG…NQPY). Positions 7 to 18 (RSGNASTPQGTS) are enriched in polar residues. A Velvet domain is found at 53–274 (RDHIEYQLTV…AEQGLKVRVR (222 aa)). Basic residues predominate over residues 271–285 (VRVRKHPRSRRRGSK). Over residues 407–423 (PPRDFADGRYMDGDYPP) the composition is skewed to basic and acidic residues. The Nuclear localization signal signature appears at 438-445 (RAGPSEYS). Positions 620 to 631 (AAARRSPIPSAR) are enriched in low complexity. Composition is skewed to basic and acidic residues over residues 723-741 (TRDR…DRDQ) and 760-796 (GELD…RRDF). Residues 800–814 (TMPSKPSSRGHNQPY) show a composition bias toward polar residues.

It belongs to the velvet family. VosA subfamily. Forms a heterodimeric complex with velB; the formation of the VEL2-VOS1 complex is light-dependent.

It is found in the nucleus. Its function is as follows. Component of the velB-VosA heterodimeric complex that plays a dual role in activating genes associated with spore maturation and repressing certain development-associated genes. The complex binds DNA through the DNA-binding domain of vosA that recognizes an 11-nucleotide consensus sequence 5'-CTGGCCGCGGC-3' consisting of two motifs in the promoters of key developmental regulatory genes. Required for gall induction and teliospore formation on seedlings. This chain is Spore development regulator umv1, found in Mycosarcoma maydis (Corn smut fungus).